Here is a 764-residue protein sequence, read N- to C-terminus: Bifunctional type I diterpene synthase tndC (764 aa).

The terpene cyclase stretch occupies residues 1–324; it reads MEYRYSTVVD…CPRYHPWSSY (324 aa). The Mg(2+) site is built by Asp-92 and Asp-96. The DDXXD 1 motif lies at 92 to 96; sequence DDVTD. The short motif at 224 to 232 is the NSE/DTE element; the sequence is NDLYSWQKE. The tract at residues 325–761 is prenyltransferase; it reads NERQLDWMKN…FQLRLILEML (437 aa). Positions 377-403 are disordered; sequence AVNGNGASHTSSIKGSTGGNGVTHSPV. A compositionally biased stretch (polar residues) spans 381–391; it reads NGASHTSSIKG. Residues Lys-484, Arg-487, and His-516 each contribute to the isopentenyl diphosphate site. The Mg(2+) site is built by Asp-523 and Asp-527. The DDXXD 2 signature appears at 523–527; it reads DDLED. Arg-532 contacts dimethylallyl diphosphate. Arg-533 lines the isopentenyl diphosphate pocket. Dimethylallyl diphosphate contacts are provided by Lys-610, Thr-611, Gln-646, Asn-653, Lys-663, and Lys-673.

This sequence in the N-terminal section; belongs to the terpene synthase family. It in the C-terminal section; belongs to the FPP/GGPP synthase family.

It catalyses the reaction isopentenyl diphosphate + (2E,6E)-farnesyl diphosphate = (2E,6E,10E)-geranylgeranyl diphosphate + diphosphate. The catalysed reaction is (2E,6E,10E)-geranylgeranyl diphosphate = talarodiene + diphosphate. Its pathway is secondary metabolite biosynthesis; terpenoid biosynthesis. Its function is as follows. Bifunctional type I diterpene synthase; part of the gene cluster that mediates the biosynthesis of talaronoid C, a fusicoccane diterpenoid with an unprecedented tricyclic 5/8/6 ring system. The first step in the pathway is performed by the fusicoccadiene synthase tndC that possesses both prenyl transferase and terpene cyclase activity, converting isopentenyl diphosphate and dimethylallyl diphosphate into geranylgeranyl diphosphate (GGDP) and further converting GGDP into talarodiene, a precursor for talaronoid C. The remaining enzymes from the cluster include the cytochrome P450 monooxygenase tndB, the aldehyde reductase tndE and the alcohol dehydrogenase tndF that are involved in the conversion of talarodiene into talaronoid C. The protein is Bifunctional type I diterpene synthase tndC of Aspergillus flavipes.